The following is a 64-amino-acid chain: Disintegrin VB7A (64 aa).

The Disintegrin domain occupies 1–64 (NSGNPCCDPV…SDCPRNPYKD (64 aa)). 4 disulfides stabilise this stretch: Cys-6-Cys-29, Cys-20-Cys-26, Cys-25-Cys-50, and Cys-38-Cys-57. The Cell attachment site signature appears at 42–44 (RGD).

The protein belongs to the disintegrin family. Dimeric disintegrin subfamily. As to quaternary structure, heterodimer with VB7B; disulfide-linked. As to expression, expressed by the venom gland.

Its subcellular location is the secreted. Poor inhibitor of platelet aggregation. The disintegrin inhibits the adhesion of cells expressing the RGD-dependent integrin alpha-5/beta-1 (ITGA5/ITGB1) to immobilized fibronectin. Inhibition on alpha-2b/beta-3 (ITGA2B/ITGB3) is low. This is Disintegrin VB7A from Vipera berus berus (Common viper).